Consider the following 88-residue polypeptide: MASSDVKPKSVSHAKKWSEEIENLYRFQQAGYRDETEYRQVKQVSMVDRWPETGYVKKLQRRDNTFYYYNKQRECDDKEVHKVKIYAY.

The protein belongs to the MEIG1 family. As to quaternary structure, interacts with PACRG. Interacts with MORN3.

In terms of biological role, essential for spermiogenesis. This chain is Meiosis expressed gene 1 protein homolog, found in Homo sapiens (Human).